Here is a 642-residue protein sequence, read N- to C-terminus: Medium-chain-fatty-acid--[acyl-carrier-protein] ligase TtuA (642 aa).

This sequence belongs to the ATP-dependent AMP-binding enzyme family.

It catalyses the reaction a medium-chain fatty acid + holo-[ACP] + ATP = a medium-chain fatty acyl-[ACP] + AMP + diphosphate. It carries out the reaction a medium-chain fatty acid + ATP + H(+) = a medium-chain fatty acyl-AMP + diphosphate. The catalysed reaction is a medium-chain fatty acyl-AMP + holo-[ACP] = a medium-chain fatty acyl-[ACP] + AMP + H(+). The enzyme catalyses decanoate + holo-[ACP] + ATP = decanoyl-[ACP] + AMP + diphosphate. It catalyses the reaction decanoate + ATP + H(+) = decanoyl-AMP + diphosphate. It carries out the reaction decanoyl-AMP + holo-[ACP] = decanoyl-[ACP] + AMP + H(+). Functionally, ligase likely involved in the biosynthesis of a polyyne metabolite. Catalyzes the activation of decanoic acid, followed by the loading of the activated decanoic acid onto the acyl carrier protein TtuC. Decanoic acid is the preferred substrate, but it can also use 10-undecenoic acid and lauric acid. Nonanoic acid and 7-octenoic acid are only weakly activated. This chain is Medium-chain-fatty-acid--[acyl-carrier-protein] ligase TtuA, found in Teredinibacter turnerae (strain ATCC 39867 / T7901).